The following is an 86-amino-acid chain: Acyl carrier protein (86 aa).

Residues 7 to 85 (SKVDNIEQKV…DVVNYIKEHK (79 aa)) enclose the Carrier domain. Ser45 is modified (O-(pantetheine 4'-phosphoryl)serine).

The protein belongs to the acyl carrier protein (ACP) family. 4'-phosphopantetheine is transferred from CoA to a specific serine of apo-ACP by AcpS. This modification is essential for activity because fatty acids are bound in thioester linkage to the sulfhydryl of the prosthetic group.

The protein resides in the cytoplasm. It functions in the pathway lipid metabolism; fatty acid biosynthesis. Its function is as follows. Carrier of the growing fatty acid chain in fatty acid biosynthesis. The protein is Acyl carrier protein of Rickettsia bellii (strain RML369-C).